We begin with the raw amino-acid sequence, 173 residues long: DASH complex subunit SPC19 (173 aa).

The protein belongs to the DASH complex SPC19 family. As to quaternary structure, component of the DASH complex consisting of ASK1, DAD1, DAD2, DAD3, DAD4, DAM1, DUO1, HSK3, SPC19 and SPC34, with a stoichiometry of one copy of each subunit per complex. Multiple DASH complexes oligomerize to form a ring that encircles spindle microtubules and organizes the rod-like NDC80 complexes of the outer kinetochore. DASH complex oligomerization strengthens microtubule attachments. On cytoplasmic microtubules, DASH complexes appear to form patches instead of rings.

It is found in the nucleus. The protein resides in the cytoplasm. It localises to the cytoskeleton. Its subcellular location is the spindle. The protein localises to the chromosome. It is found in the centromere. The protein resides in the kinetochore. Its function is as follows. Component of the DASH complex that connects microtubules with kinetochores and couples microtubule depolymerisation to chromosome movement; it is involved in retrieving kinetochores to the spindle poles before their re-orientation on the spindle in early mitosis and allows microtubule depolymerization to pull chromosomes apart and resist detachment during anaphase. Kinetochores, consisting of a centromere-associated inner segment and a microtubule-contacting outer segment, play a crucial role in chromosome segregation by mediating the physical connection between centromeric DNA and microtubules. Kinetochores also serve as an input point for the spindle assembly checkpoint, which delays anaphase until all chromosomes have bioriented on the mitotic spindle. This Chaetomium thermophilum (strain DSM 1495 / CBS 144.50 / IMI 039719) (Thermochaetoides thermophila) protein is DASH complex subunit SPC19.